A 64-amino-acid chain; its full sequence is MMFRLTSVSCFLLVIACLNLVVLTNACLRDGQSCGYDSDCCRYSCCWGYCDLTCLINGKRATFQ.

A signal peptide spans 1–26 (MMFRLTSVSCFLLVIACLNLVVLTNA). Cystine bridges form between Cys-27–Cys-41, Cys-34–Cys-46, Cys-40–Cys-50, and Cys-45–Cys-54. Asn-57 carries the post-translational modification Asparagine amide. A propeptide spanning residues 61–64 (ATFQ) is cleaved from the precursor.

Belongs to the conotoxin I2 superfamily. Expressed by the venom duct.

Its subcellular location is the secreted. This Conus imperialis (Imperial cone) protein is Conotoxin Im11.1.